A 404-amino-acid chain; its full sequence is DNA replication and repair protein RecF (404 aa).

30 to 37 (GSNGQGKT) contributes to the ATP binding site.

Belongs to the RecF family.

Its subcellular location is the cytoplasm. In terms of biological role, the RecF protein is involved in DNA metabolism; it is required for DNA replication and normal SOS inducibility. RecF binds preferentially to single-stranded, linear DNA. It also seems to bind ATP. This chain is DNA replication and repair protein RecF, found in Clavibacter michiganensis subsp. michiganensis (strain NCPPB 382).